The following is a 201-amino-acid chain: dITP/XTP pyrophosphatase (201 aa).

Residue threonine 7–lysine 12 coordinates substrate. Positions 40 and 69 each coordinate Mg(2+). Residue aspartate 69 is the Proton acceptor of the active site. Substrate-binding positions include serine 70, phenylalanine 152 to aspartate 155, lysine 175, and histidine 180 to arginine 181.

This sequence belongs to the HAM1 NTPase family. In terms of assembly, homodimer. Requires Mg(2+) as cofactor.

It catalyses the reaction XTP + H2O = XMP + diphosphate + H(+). It carries out the reaction dITP + H2O = dIMP + diphosphate + H(+). The catalysed reaction is ITP + H2O = IMP + diphosphate + H(+). Pyrophosphatase that catalyzes the hydrolysis of nucleoside triphosphates to their monophosphate derivatives, with a high preference for the non-canonical purine nucleotides XTP (xanthosine triphosphate), dITP (deoxyinosine triphosphate) and ITP. Seems to function as a house-cleaning enzyme that removes non-canonical purine nucleotides from the nucleotide pool, thus preventing their incorporation into DNA/RNA and avoiding chromosomal lesions. The polypeptide is dITP/XTP pyrophosphatase (Desulforamulus reducens (strain ATCC BAA-1160 / DSM 100696 / MI-1) (Desulfotomaculum reducens)).